Here is a 119-residue protein sequence, read N- to C-terminus: HTH-type transcriptional regulator SarX (119 aa).

A DNA-binding region (H-T-H motif) is located at residues 55–78 (LKTAMDELDLSRTKLLVSIRRLIE).

It belongs to the SarA family.

The protein localises to the cytoplasm. In terms of biological role, involved in the regulation of virulence genes. Acts as a repressor of the agr locus and consequently targets genes regulated by the agr system such as sspA, hla and hlb. Binds directly to the agr promoter region. The chain is HTH-type transcriptional regulator SarX (sarX) from Staphylococcus aureus (strain USA300).